Reading from the N-terminus, the 272-residue chain is Phosphate import ATP-binding protein PstB (272 aa).

The 242-residue stretch at 26–267 (VAARNLNFYY…PADRRTQDYI (242 aa)) folds into the ABC transporter domain. 58–65 (GPSGCGKS) serves as a coordination point for ATP.

The protein belongs to the ABC transporter superfamily. Phosphate importer (TC 3.A.1.7) family. As to quaternary structure, the complex is composed of two ATP-binding proteins (PstB), two transmembrane proteins (PstC and PstA) and a solute-binding protein (PstS).

Its subcellular location is the cell inner membrane. It carries out the reaction phosphate(out) + ATP + H2O = ADP + 2 phosphate(in) + H(+). Functionally, part of the ABC transporter complex PstSACB involved in phosphate import. Responsible for energy coupling to the transport system. This is Phosphate import ATP-binding protein PstB from Nitrobacter hamburgensis (strain DSM 10229 / NCIMB 13809 / X14).